The primary structure comprises 238 residues: Endonuclease V (238 aa).

2 residues coordinate Mg(2+): Asp46 and Asp116.

It belongs to the endonuclease V family. The cofactor is Mg(2+).

The protein resides in the cytoplasm. The catalysed reaction is Endonucleolytic cleavage at apurinic or apyrimidinic sites to products with a 5'-phosphate.. Functionally, DNA repair enzyme involved in the repair of deaminated bases. Selectively cleaves double-stranded DNA at the second phosphodiester bond 3' to a deoxyinosine leaving behind the intact lesion on the nicked DNA. The chain is Endonuclease V from Bacillus velezensis (strain DSM 23117 / BGSC 10A6 / LMG 26770 / FZB42) (Bacillus amyloliquefaciens subsp. plantarum).